The sequence spans 355 residues: DNA polymerase IV (355 aa).

The 185-residue stretch at I14 to G198 folds into the UmuC domain. Residues D18 and D116 each contribute to the Mg(2+) site. E117 is an active-site residue.

It belongs to the DNA polymerase type-Y family. As to quaternary structure, monomer. Requires Mg(2+) as cofactor.

It localises to the cytoplasm. It carries out the reaction DNA(n) + a 2'-deoxyribonucleoside 5'-triphosphate = DNA(n+1) + diphosphate. In terms of biological role, poorly processive, error-prone DNA polymerase involved in untargeted mutagenesis. Copies undamaged DNA at stalled replication forks, which arise in vivo from mismatched or misaligned primer ends. These misaligned primers can be extended by PolIV. Exhibits no 3'-5' exonuclease (proofreading) activity. May be involved in translesional synthesis, in conjunction with the beta clamp from PolIII. The polypeptide is DNA polymerase IV (Streptococcus suis (strain 98HAH33)).